The following is a 113-amino-acid chain: Ribonuclease P protein component (113 aa).

It belongs to the RnpA family. As to quaternary structure, consists of a catalytic RNA component (M1 or rnpB) and a protein subunit.

The enzyme catalyses Endonucleolytic cleavage of RNA, removing 5'-extranucleotides from tRNA precursor.. In terms of biological role, RNaseP catalyzes the removal of the 5'-leader sequence from pre-tRNA to produce the mature 5'-terminus. It can also cleave other RNA substrates such as 4.5S RNA. The protein component plays an auxiliary but essential role in vivo by binding to the 5'-leader sequence and broadening the substrate specificity of the ribozyme. This is Ribonuclease P protein component from Desulforamulus reducens (strain ATCC BAA-1160 / DSM 100696 / MI-1) (Desulfotomaculum reducens).